A 168-amino-acid chain; its full sequence is Signal peptidase complex catalytic subunit SEC11 (168 aa).

The Cytoplasmic segment spans residues 1-12; the sequence is MNLRLELTRFLN. The chain crosses the membrane as a helical; Signal-anchor for type II membrane protein span at residues 13–30; the sequence is LCFALASAFMFWKGLSIV. Residues 31–168 lie on the Lumenal side of the membrane; that stretch reads TNSHSPIVVV…IALSALLSNE (138 aa). Active-site charge relay system residues include Ser-44, His-83, and Asp-110. Positions 154–165 are C-terminal short (CTS) helix; the sequence is GLMGLIALSALL.

This sequence belongs to the peptidase S26B family. Component of the signal peptidase complex (SPC) composed of a catalytic subunit SEC11 and three accessory subunits SPC1, SPC2 and SPC3. The complex induces a local thinning of the ER membrane which is used to measure the length of the signal peptide (SP) h-region of protein substrates. This ensures the selectivity of the complex towards h-regions shorter than 18-20 amino acids. SPC associates with the translocon complex.

The protein resides in the endoplasmic reticulum membrane. The enzyme catalyses Cleavage of hydrophobic, N-terminal signal or leader sequences from secreted and periplasmic proteins.. Catalytic component of the signal peptidase complex (SPC) which catalyzes the cleavage of N-terminal signal sequences from nascent proteins as they are translocated into the lumen of the endoplasmic reticulum. Specifically cleaves N-terminal signal peptides that contain a hydrophobic alpha-helix (h-region) shorter than 18-20 amino acids. The chain is Signal peptidase complex catalytic subunit SEC11 (SEC11) from Lachancea thermotolerans (strain ATCC 56472 / CBS 6340 / NRRL Y-8284) (Yeast).